Here is a 214-residue protein sequence, read N- to C-terminus: 3-isopropylmalate dehydratase small subunit (214 aa).

Belongs to the LeuD family. LeuD type 1 subfamily. Heterodimer of LeuC and LeuD.

It carries out the reaction (2R,3S)-3-isopropylmalate = (2S)-2-isopropylmalate. Its pathway is amino-acid biosynthesis; L-leucine biosynthesis; L-leucine from 3-methyl-2-oxobutanoate: step 2/4. In terms of biological role, catalyzes the isomerization between 2-isopropylmalate and 3-isopropylmalate, via the formation of 2-isopropylmaleate. This Nitrosococcus oceani (strain ATCC 19707 / BCRC 17464 / JCM 30415 / NCIMB 11848 / C-107) protein is 3-isopropylmalate dehydratase small subunit.